Here is a 599-residue protein sequence, read N- to C-terminus: Dictomallein-2 (599 aa).

The first 20 residues, Met-1–Cys-20, serve as a signal peptide directing secretion. The Peptidase M66 domain occupies Pro-145 to Tyr-407. His-298 serves as a coordination point for Zn(2+). Glu-299 is an active-site residue. Residues His-302 and His-308 each contribute to the Zn(2+) site.

Belongs to the dictomallein family. It depends on Zn(2+) as a cofactor.

It is found in the secreted. This chain is Dictomallein-2 (dtmlB), found in Dictyostelium discoideum (Social amoeba).